The sequence spans 335 residues: 2,4-dienoyl-CoA reductase [(3E)-enoyl-CoA-producing], mitochondrial (335 aa).

A mitochondrion-targeting transit peptide spans 1–34 (MALLGRAFFAGVSRLPCDPGPQRFFSFGTKTLYQ). N6-acetyllysine; alternate occurs at positions 42 and 49. N6-succinyllysine; alternate is present on residues Lys42 and Lys49. 66-71 (GGGTGL) contributes to the NADP(+) binding site. Thr69 bears the Phosphothreonine mark. Lys73 is subject to N6-succinyllysine. Arg91 is a binding site for NADP(+). Arg91 contributes to the substrate binding site. Residues Lys97 and Lys106 each carry the N6-acetyllysine; alternate modification. An N6-succinyllysine; alternate mark is found at Lys97 and Lys106. An NADP(+)-binding site is contributed by Asp117. Positions 119 and 149 each coordinate substrate. Residue Tyr199 is the Proton acceptor of the active site. NADP(+)-binding positions include Lys214 and 240–243 (PGPI). Residue Lys244 is modified to N6-acetyllysine; alternate. Residue Lys244 is modified to N6-succinyllysine; alternate. Arg251 serves as a coordination point for substrate. Residue Lys260 is modified to N6-acetyllysine; alternate. At Lys260 the chain carries N6-succinyllysine; alternate. Lys315 is subject to N6-acetyllysine. Lys319 bears the N6-acetyllysine; alternate mark. Lys319 bears the N6-succinyllysine; alternate mark.

Belongs to the short-chain dehydrogenases/reductases (SDR) family. 2,4-dienoyl-CoA reductase subfamily. As to quaternary structure, homotetramer.

Its subcellular location is the mitochondrion. It catalyses the reaction a (2E,4E)-dienoyl-CoA + NADPH + H(+) = a 4,5-saturated-(3E)-enoyl-CoA + NADP(+). The enzyme catalyses a (2E,4Z)-dienoyl-CoA + NADPH + H(+) = a 4,5-saturated-(3E)-enoyl-CoA + NADP(+). It carries out the reaction (2E,4E)-hexadienoyl-CoA + NADPH + H(+) = (3E)-hexenoyl-CoA + NADP(+). Its function is as follows. Auxiliary enzyme of beta-oxidation. It participates in the metabolism of unsaturated fatty enoyl-CoA esters having double bonds in both even- and odd-numbered positions in mitochondria. Catalyzes the NADP-dependent reduction of 2,4-dienoyl-CoA to yield trans-3-enoyl-CoA. This chain is 2,4-dienoyl-CoA reductase [(3E)-enoyl-CoA-producing], mitochondrial (Decr1), found in Mus musculus (Mouse).